The primary structure comprises 347 residues: Zinc finger protein CONSTANS-LIKE 2 (347 aa).

Positions 16, 19, 39, 44, 59, 62, 82, and 87 each coordinate Zn(2+). The B box-type 1; atypical zinc finger occupies 16-58; sequence CDTCRSAACTVYCEADSAYLCTTCDARVHAANRVASRHERVRV. The B box-type 2; atypical zinc-finger motif lies at 59–101; sequence CQSCESAPAAFLCKADAASLCTACDAEIHSANPLARRHQRVPI. A CCT domain is found at 278-320; it reads REARVLRYREKKKTRKFDKTIRYASRKAYAEIRPRIKGRFAKR.

This sequence belongs to the CONSTANS family. In terms of tissue distribution, highly expressed in leaves. Expressed at lower levels in stems, flowers and siliques. Not detected in roots.

It is found in the nucleus. In terms of biological role, putative transcription factor. Does not affect flowering time. The protein is Zinc finger protein CONSTANS-LIKE 2 (COL2) of Arabidopsis thaliana (Mouse-ear cress).